A 697-amino-acid polypeptide reads, in one-letter code: Phosphoribosylformylglycinamidine synthase subunit PurL (697 aa).

Histidine 34 is a catalytic residue. Residues tyrosine 37 and lysine 76 each contribute to the ATP site. Glutamate 78 contacts Mg(2+). Substrate is bound by residues 79 to 82 and arginine 101; that span reads SHNH. Histidine 80 functions as the Proton acceptor in the catalytic mechanism. Aspartate 102 lines the Mg(2+) pocket. Residue glutamine 224 participates in substrate binding. Position 250 (aspartate 250) interacts with Mg(2+). Residue 294–296 participates in substrate binding; it reads ETQ. Aspartate 472 and glycine 509 together coordinate ATP. Residue serine 512 coordinates substrate.

It belongs to the FGAMS family. Monomer. Part of the FGAM synthase complex composed of 1 PurL, 1 PurQ and 2 PurS subunits.

It is found in the cytoplasm. The catalysed reaction is N(2)-formyl-N(1)-(5-phospho-beta-D-ribosyl)glycinamide + L-glutamine + ATP + H2O = 2-formamido-N(1)-(5-O-phospho-beta-D-ribosyl)acetamidine + L-glutamate + ADP + phosphate + H(+). It participates in purine metabolism; IMP biosynthesis via de novo pathway; 5-amino-1-(5-phospho-D-ribosyl)imidazole from N(2)-formyl-N(1)-(5-phospho-D-ribosyl)glycinamide: step 1/2. Functionally, part of the phosphoribosylformylglycinamidine synthase complex involved in the purines biosynthetic pathway. Catalyzes the ATP-dependent conversion of formylglycinamide ribonucleotide (FGAR) and glutamine to yield formylglycinamidine ribonucleotide (FGAM) and glutamate. The FGAM synthase complex is composed of three subunits. PurQ produces an ammonia molecule by converting glutamine to glutamate. PurL transfers the ammonia molecule to FGAR to form FGAM in an ATP-dependent manner. PurS interacts with PurQ and PurL and is thought to assist in the transfer of the ammonia molecule from PurQ to PurL. This Pyrobaculum aerophilum (strain ATCC 51768 / DSM 7523 / JCM 9630 / CIP 104966 / NBRC 100827 / IM2) protein is Phosphoribosylformylglycinamidine synthase subunit PurL.